The following is a 446-amino-acid chain: D(1A) dopamine receptor (446 aa).

Topologically, residues 1 to 23 (MRTLNTSAMDGTGLVVERDFSVR) are extracellular. Asn5 is a glycosylation site (N-linked (GlcNAc...) asparagine). Residues 24–49 (ILTACFLSLLILSTLLGNTLVCAAVI) traverse the membrane as a helical segment. Residues 50–60 (RFRHLRSKVTN) are Cytoplasmic-facing. The helical transmembrane segment at 61–87 (FFVISLAVSDLLVAVLVMPWKAVAEIA) threads the bilayer. The Extracellular segment spans residues 88-96 (GFWPFGSFC). Cysteines 96 and 186 form a disulfide. Residues 97–119 (NIWVAFDIMCSTASILNLCVISV) traverse the membrane as a helical segment. Residues 120–138 (DRYWAISSPFRYERKMTPK) are Cytoplasmic-facing. The chain crosses the membrane as a helical span at residues 139–163 (AAFILISVAWTLSVLISFIPVQLSW). Residues 164 to 192 (HKAKPTSPSDGNATSLAETIDNCDSSLSR) lie on the Extracellular side of the membrane. Asn175 carries N-linked (GlcNAc...) asparagine glycosylation. The chain crosses the membrane as a helical span at residues 193–218 (TYAISSSVISFYIPVAIMIVTYTRIY). Over 219–272 (RIAQKQIRRIAALERAAVHAKNCQTTTGNGKPVECSQPESSFKMSFKRETKVLK) the chain is Cytoplasmic. A helical membrane pass occupies residues 273 to 299 (TLSVIMGVFVCCWLPFFILNCILPFCG). Residues 300–312 (SGETQPFCIDSIT) lie on the Extracellular side of the membrane. Residues 313–337 (FDVFVWFGWANSSLNPIIYAFNADF) form a helical membrane-spanning segment. Residues 338–446 (RKAFSTLLGC…PITQNGQHPT (109 aa)) are Cytoplasmic-facing. 2 S-palmitoyl cysteine lipidation sites follow: Cys347 and Cys351.

The protein belongs to the G-protein coupled receptor 1 family. Interacts with DNAJC14 via its C-terminus. Interacts with DRD2. Interacts with DORIP1.

It localises to the cell membrane. It is found in the endoplasmic reticulum membrane. The protein localises to the cell projection. Its subcellular location is the cilium membrane. The protein resides in the dendrite. It localises to the dendritic spine. In terms of biological role, dopamine receptor whose activity is mediated by G proteins which activate adenylyl cyclase. This is D(1A) dopamine receptor (DRD1) from Macaca mulatta (Rhesus macaque).